The sequence spans 121 residues: Nitrogenase-stabilizing/protective protein NifW (121 aa).

This sequence belongs to the NifW family. Homotrimer; associates with NifD.

Functionally, may protect the nitrogenase Fe-Mo protein from oxidative damage. The chain is Nitrogenase-stabilizing/protective protein NifW from Synechococcus sp. (strain JA-2-3B'a(2-13)) (Cyanobacteria bacterium Yellowstone B-Prime).